The following is a 77-amino-acid chain: Protein ImpC (77 aa).

Belongs to the DinI family.

The chain is Protein ImpC (impC) from Salmonella typhimurium.